Here is a 204-residue protein sequence, read N- to C-terminus: 8-oxoguanine DNA glycosylase/AP lyase (204 aa).

Active-site residues include K129 and D147.

This sequence belongs to the type-2 OGG1 family.

The enzyme catalyses 2'-deoxyribonucleotide-(2'-deoxyribose 5'-phosphate)-2'-deoxyribonucleotide-DNA = a 3'-end 2'-deoxyribonucleotide-(2,3-dehydro-2,3-deoxyribose 5'-phosphate)-DNA + a 5'-end 5'-phospho-2'-deoxyribonucleoside-DNA + H(+). Functionally, catalyzes the excision of an oxidatively damaged form of guanine (7,8-dihydro-8-oxoguanine = 8-oxoG) from DNA. Also cleaves the DNA backbone at apurinic/apyrimidinic sites (AP sites). The polypeptide is 8-oxoguanine DNA glycosylase/AP lyase (Thermoplasma acidophilum (strain ATCC 25905 / DSM 1728 / JCM 9062 / NBRC 15155 / AMRC-C165)).